Consider the following 300-residue polypeptide: NAD kinase (300 aa).

Residue Asp75 is the Proton acceptor of the active site. NAD(+) is bound by residues 75–76 (DG), 149–150 (ND), Arg177, Asp179, 190–195 (TAYALS), Ala214, and Gln248.

The protein belongs to the NAD kinase family. The cofactor is a divalent metal cation.

It is found in the cytoplasm. It catalyses the reaction NAD(+) + ATP = ADP + NADP(+) + H(+). Functionally, involved in the regulation of the intracellular balance of NAD and NADP, and is a key enzyme in the biosynthesis of NADP. Catalyzes specifically the phosphorylation on 2'-hydroxyl of the adenosine moiety of NAD to yield NADP. This is NAD kinase from Burkholderia cenocepacia (strain HI2424).